The chain runs to 880 residues: Alanine--tRNA ligase (880 aa).

Zn(2+)-binding residues include His558, His562, Cys663, and His667.

This sequence belongs to the class-II aminoacyl-tRNA synthetase family. It depends on Zn(2+) as a cofactor.

The protein localises to the cytoplasm. The catalysed reaction is tRNA(Ala) + L-alanine + ATP = L-alanyl-tRNA(Ala) + AMP + diphosphate. Its function is as follows. Catalyzes the attachment of alanine to tRNA(Ala) in a two-step reaction: alanine is first activated by ATP to form Ala-AMP and then transferred to the acceptor end of tRNA(Ala). Also edits incorrectly charged Ser-tRNA(Ala) and Gly-tRNA(Ala) via its editing domain. This Mycoplasmopsis agalactiae (strain NCTC 10123 / CIP 59.7 / PG2) (Mycoplasma agalactiae) protein is Alanine--tRNA ligase.